Here is a 379-residue protein sequence, read N- to C-terminus: Cell cycle checkpoint control protein RAD9A (379 aa).

Tyrosine 17 is subject to Phosphotyrosine. The tract at residues 40 to 80 (FLFAPLFFQQYQAATPGQDLLRCKILMKSFLSVFRSLAMLE) is possesses 3'-5' exonuclease activity. The tract at residues 255 to 379 (SDTDSHSQDL…VLAEDSEGEG (125 aa)) is sufficient for interaction with ABL1. Positions 257 to 271 (TDSHSQDLGSPERHQ) are enriched in basic and acidic residues. Disordered regions lie at residues 257–289 (TDSHSQDLGSPERHQPVPQLQAHSIPHPDDFAN) and 308–379 (SRVL…EGEG). Serine 261, serine 266, serine 317, serine 330, serine 363, serine 368, and serine 375 each carry phosphoserine.

It belongs to the rad9 family. Component of the toroidal 9-1-1 (RAD9-RAD1-HUS1) complex, composed of RAD9A, RAD1 and HUS1. The 9-1-1 complex associates with LIG1, POLB, FEN1, RAD17, HDAC1, RPA1 and RPA2. The 9-1-1 complex associates with the RAD17-RFC complex. RAD9A interacts with BCL2L1, FEN1, RAD9B, ABL1, RPA1, ATAD5 and RPA2. Interacts with DNAJC7. Interacts (when phosphorylated) with TOPBP1. Constitutively phosphorylated on serine and threonine amino acids in absence of DNA damage. Hyperphosphorylated by PRKCD and ABL1 upon DNA damage. Its phosphorylation by PRKCD may be required for the formation of the 9-1-1 complex. Phosphorylated at Ser-330 and Ser-375 by CK2, promoting interaction with TOPBP1.

It is found in the nucleus. The enzyme catalyses Exonucleolytic cleavage in the 3'- to 5'-direction to yield nucleoside 5'-phosphates.. Its function is as follows. Component of the 9-1-1 cell-cycle checkpoint response complex that plays a major role in DNA repair. The 9-1-1 complex is recruited to DNA lesion upon damage by the RAD17-replication factor C (RFC) clamp loader complex. Acts then as a sliding clamp platform on DNA for several proteins involved in long-patch base excision repair (LP-BER). The 9-1-1 complex stimulates DNA polymerase beta (POLB) activity by increasing its affinity for the 3'-OH end of the primer-template and stabilizes POLB to those sites where LP-BER proceeds; endonuclease FEN1 cleavage activity on substrates with double, nick, or gap flaps of distinct sequences and lengths; and DNA ligase I (LIG1) on long-patch base excision repair substrates. The 9-1-1 complex is necessary for the recruitment of RHNO1 to sites of double-stranded breaks (DSB) occurring during the S phase. RAD9A possesses 3'-&gt;5' double stranded DNA exonuclease activity. This Macaca fascicularis (Crab-eating macaque) protein is Cell cycle checkpoint control protein RAD9A (RAD9A).